We begin with the raw amino-acid sequence, 164 residues long: Galectin-3 (164 aa).

Residues 9-154 (STVDLSEPLK…FSDVLGVTVL (146 aa)) form the Galectin domain. 6 residues coordinate a carbohydrate: asparagine 45, arginine 64, asparagine 73, arginine 81, glutamate 84, and asparagine 138.

Homotetramer. Oligomerization is required for carbohydrate binding.

The protein localises to the secreted. It localises to the extracellular space. Its subcellular location is the extracellular matrix. It is found in the cell wall. In terms of biological role, binds complex carbohydrates, such as chitooligosaccharides. Does not bind lactose. May play a role in fruiting body formation. This Coprinopsis cinerea (Inky cap fungus) protein is Galectin-3 (Cgl3).